We begin with the raw amino-acid sequence, 302 residues long: Pseudouridine-5'-phosphate glycosidase (302 aa).

Glutamate 25 functions as the Proton donor in the catalytic mechanism. The substrate site is built by lysine 86 and valine 106. Aspartate 138 contacts Mn(2+). 140-142 is a binding site for substrate; it reads SAD. Residue lysine 159 is the Nucleophile of the active site.

It belongs to the pseudouridine-5'-phosphate glycosidase family. Homotrimer. Requires Mn(2+) as cofactor.

The catalysed reaction is D-ribose 5-phosphate + uracil = psi-UMP + H2O. In terms of biological role, catalyzes the reversible cleavage of pseudouridine 5'-phosphate (PsiMP) to ribose 5-phosphate and uracil. Functions biologically in the cleavage direction, as part of a pseudouridine degradation pathway. This is Pseudouridine-5'-phosphate glycosidase from Jannaschia sp. (strain CCS1).